A 474-amino-acid chain; its full sequence is Proline--tRNA ligase (474 aa).

This sequence belongs to the class-II aminoacyl-tRNA synthetase family. ProS type 3 subfamily. Homodimer.

The protein resides in the cytoplasm. The enzyme catalyses tRNA(Pro) + L-proline + ATP = L-prolyl-tRNA(Pro) + AMP + diphosphate. Functionally, catalyzes the attachment of proline to tRNA(Pro) in a two-step reaction: proline is first activated by ATP to form Pro-AMP and then transferred to the acceptor end of tRNA(Pro). The sequence is that of Proline--tRNA ligase from Phytoplasma australiense.